The sequence spans 520 residues: J protein JJJ2 (520 aa).

Positions 7 to 71 (TYYSVLGLPT…SSKQEYDAIL (65 aa)) constitute a J domain. Disordered stretches follow at residues 82 to 257 (LGYK…DLQN) and 389 to 409 (FESS…RGRP). The segment covering 91–100 (QNQSNNLNQQ) has biased composition (low complexity). Positions 152–182 (TSKNSKEQQGSQETTNTSENLQRNAKGNKNN) are enriched in polar residues. The span at 397–409 (ENHRSDFNLRGRP) shows a compositional bias: basic and acidic residues.

It is found in the cytoplasm. The protein resides in the nucleus. This is J protein JJJ2 (JJJ2) from Vanderwaltozyma polyspora (strain ATCC 22028 / DSM 70294 / BCRC 21397 / CBS 2163 / NBRC 10782 / NRRL Y-8283 / UCD 57-17) (Kluyveromyces polysporus).